Consider the following 264-residue polypeptide: Glutamate 5-kinase (264 aa).

Lys-15 is a binding site for ATP. Residues Ser-55, Asp-142, and Asn-154 each coordinate substrate. Residues Ser-174 to Asp-175 and Thr-216 to Lys-222 each bind ATP.

Belongs to the glutamate 5-kinase family.

The protein resides in the cytoplasm. The enzyme catalyses L-glutamate + ATP = L-glutamyl 5-phosphate + ADP. The protein operates within amino-acid biosynthesis; L-proline biosynthesis; L-glutamate 5-semialdehyde from L-glutamate: step 1/2. Functionally, catalyzes the transfer of a phosphate group to glutamate to form L-glutamate 5-phosphate. The protein is Glutamate 5-kinase of Alkaliphilus metalliredigens (strain QYMF).